The sequence spans 265 residues: 3-methyl-2-oxobutanoate hydroxymethyltransferase (265 aa).

2 residues coordinate Mg(2+): Asp-45 and Asp-84. Residues 45–46, Asp-84, and Lys-112 each bind 3-methyl-2-oxobutanoate; that span reads DS. Glu-114 provides a ligand contact to Mg(2+). Glu-181 serves as the catalytic Proton acceptor.

Belongs to the PanB family. Homodecamer; pentamer of dimers. Requires Mg(2+) as cofactor.

The protein localises to the cytoplasm. The catalysed reaction is 3-methyl-2-oxobutanoate + (6R)-5,10-methylene-5,6,7,8-tetrahydrofolate + H2O = 2-dehydropantoate + (6S)-5,6,7,8-tetrahydrofolate. It participates in cofactor biosynthesis; (R)-pantothenate biosynthesis; (R)-pantoate from 3-methyl-2-oxobutanoate: step 1/2. Catalyzes the reversible reaction in which hydroxymethyl group from 5,10-methylenetetrahydrofolate is transferred onto alpha-ketoisovalerate to form ketopantoate. This Yersinia pseudotuberculosis serotype O:1b (strain IP 31758) protein is 3-methyl-2-oxobutanoate hydroxymethyltransferase.